Reading from the N-terminus, the 258-residue chain is UPF0246 protein Pnuc_0753 (258 aa).

Belongs to the UPF0246 family.

The protein is UPF0246 protein Pnuc_0753 of Polynucleobacter asymbioticus (strain DSM 18221 / CIP 109841 / QLW-P1DMWA-1) (Polynucleobacter necessarius subsp. asymbioticus).